The sequence spans 986 residues: Bifunctional glutamine synthetase adenylyltransferase/adenylyl-removing enzyme (986 aa).

The adenylyl removase stretch occupies residues 1 to 473 (MTSSAPGNAD…HYARLFEGDP (473 aa)). The interval 478 to 986 (SLPPVNYGAG…RRVFTALLER (509 aa)) is adenylyl transferase.

The protein belongs to the GlnE family. Requires Mg(2+) as cofactor.

It catalyses the reaction [glutamine synthetase]-O(4)-(5'-adenylyl)-L-tyrosine + phosphate = [glutamine synthetase]-L-tyrosine + ADP. It carries out the reaction [glutamine synthetase]-L-tyrosine + ATP = [glutamine synthetase]-O(4)-(5'-adenylyl)-L-tyrosine + diphosphate. Functionally, involved in the regulation of glutamine synthetase GlnA, a key enzyme in the process to assimilate ammonia. When cellular nitrogen levels are high, the C-terminal adenylyl transferase (AT) inactivates GlnA by covalent transfer of an adenylyl group from ATP to specific tyrosine residue of GlnA, thus reducing its activity. Conversely, when nitrogen levels are low, the N-terminal adenylyl removase (AR) activates GlnA by removing the adenylyl group by phosphorolysis, increasing its activity. The regulatory region of GlnE binds the signal transduction protein PII (GlnB) which indicates the nitrogen status of the cell. The protein is Bifunctional glutamine synthetase adenylyltransferase/adenylyl-removing enzyme of Bradyrhizobium sp. (strain ORS 278).